The chain runs to 604 residues: Testis-expressed protein 13C-1 (604 aa).

4 disordered regions span residues 314-337 (EGEGPEKPQGTSLHGDSSNNSHKD), 374-397 (PVMPKGISSQGNKTSSTKKKRPKI), 485-523 (CLNAGVSPNEKKMPQGTGKNQSQRQKEEPNSFQANHPRK), and 538-580 (ATKQ…SANC). Polar residues predominate over residues 322-333 (QGTSLHGDSSNN). Positions 544-572 (KQPEGIKSLESKQPQETKSSESKQQEKPL) are enriched in basic and acidic residues.

The protein belongs to the TEX13 family.

Functionally, plays a role in transcriptional repression. The sequence is that of Testis-expressed protein 13C-1 from Mus musculus (Mouse).